We begin with the raw amino-acid sequence, 474 residues long: Kynureninase 2 (474 aa).

Pyridoxal 5'-phosphate contacts are provided by residues Leu144, Thr145, Phe172–Asp175, Asp258, His261, and Tyr283. N6-(pyridoxal phosphate)lysine is present on Lys284. The pyridoxal 5'-phosphate site is built by Trp323 and Thr351.

Belongs to the kynureninase family. As to quaternary structure, homodimer. Pyridoxal 5'-phosphate serves as cofactor.

It localises to the cytoplasm. It catalyses the reaction L-kynurenine + H2O = anthranilate + L-alanine + H(+). The enzyme catalyses 3-hydroxy-L-kynurenine + H2O = 3-hydroxyanthranilate + L-alanine + H(+). Its pathway is amino-acid degradation; L-kynurenine degradation; L-alanine and anthranilate from L-kynurenine: step 1/1. It participates in cofactor biosynthesis; NAD(+) biosynthesis; quinolinate from L-kynurenine: step 2/3. Catalyzes the cleavage of L-kynurenine (L-Kyn) and L-3-hydroxykynurenine (L-3OHKyn) into anthranilic acid (AA) and 3-hydroxyanthranilic acid (3-OHAA), respectively. In Emericella nidulans (strain FGSC A4 / ATCC 38163 / CBS 112.46 / NRRL 194 / M139) (Aspergillus nidulans), this protein is Kynureninase 2 (bna5-2).